We begin with the raw amino-acid sequence, 120 residues long: Seminal plasma protein HSP-1 (120 aa).

Repeat copies occupy residues 1–13 (DLQTTGADHSATV) and 16–28 (DQQLIMTKHSATV). Residues 1-28 (DLQTTGADHSATVNPDQQLIMTKHSATV) are 2 X approximate repeats. O-linked (GalNAc...) threonine glycans are attached at residues threonine 5, threonine 12, threonine 22, and threonine 27. 2 consecutive Fibronectin type-II domains span residues 29-73 (TPEN…YCAA) and 74-120 (TDYA…WKYC). 4 disulfides stabilise this stretch: cysteine 34–cysteine 58, cysteine 48–cysteine 71, cysteine 79–cysteine 105, and cysteine 93–cysteine 120.

It belongs to the seminal plasma protein family. In terms of assembly, one glycoform exists as a monomer while the other forms a heterotetramer with HSP-2 and binds heparin. In terms of processing, O-glycosylated on Thr. There are two forms of HSP-1 which probably differ in the amount of sialylation of polysaccharide. As to expression, major component of seminal plasma.

Its subcellular location is the secreted. In terms of biological role, could enhance the fertilizing capacity of spermatozoa upon interaction with heparin-like glycosaminoglycans present in the female genital tract. This chain is Seminal plasma protein HSP-1, found in Equus caballus (Horse).